The sequence spans 714 residues: BBSome complex member bbs-2 (714 aa).

2 coiled-coil regions span residues 332–361 (IREFGQKKHNLMMELSNYEQEEQLADVEKD) and 597–627 (MTEVRDRLTAELQERQAAVKEIIIRAEDSIA).

As to quaternary structure, part of BBSome complex, that contains at least bbs-1, bbs-2, bbs-4, bbs-5, osm-12, bbs-8/ttc-8 and bbs-9. In terms of tissue distribution, expressed in ciliated cells including amphid and both inner and outer labial neurons of the head and in both phasmid neurons PHA and PHB in the tail at larval stages L1 and L2.

It localises to the cell projection. It is found in the cilium. The protein localises to the cytoplasm. The protein resides in the cytoskeleton. Its subcellular location is the cilium basal body. It localises to the cilium axoneme. Component of the BBSome complex. The BBSome complex is thought to function as a coat complex required for sorting of specific membrane proteins to the primary cilia. The BBSome complex is required for ciliogenesis but is dispensable for centriolar satellite function. Required for proper BBSome complex assembly and its ciliary localization. Required for cilia biogenesis and both the assembly and movement of intraflagellar transport proteins along the ciliary axoneme. The chain is BBSome complex member bbs-2 from Caenorhabditis elegans.